We begin with the raw amino-acid sequence, 657 residues long: Glycogen debranching enzyme (657 aa).

Asp336 acts as the Nucleophile in catalysis. Catalysis depends on Glu371, which acts as the Proton donor. The segment at 460–479 (ANGEENRDGTNNNYSNNHGK) is disordered.

The protein belongs to the glycosyl hydrolase 13 family.

It carries out the reaction Hydrolysis of (1-&gt;6)-alpha-D-glucosidic linkages to branches with degrees of polymerization of three or four glucose residues in limit dextrin.. It participates in glycan degradation; glycogen degradation. Its function is as follows. Removes maltotriose and maltotetraose chains that are attached by 1,6-alpha-linkage to the limit dextrin main chain, generating a debranched limit dextrin. The sequence is that of Glycogen debranching enzyme from Shigella flexneri serotype 5b (strain 8401).